Consider the following 764-residue polypeptide: DNA replication regulator DPB11 (764 aa).

3 consecutive BRCT domains span residues 1–99 (MKPF…MTGS), 129–220 (TNIT…PYYL), and 322–418 (NSTL…DLWS). 2 disordered regions span residues 651-675 (ETDS…RQMP) and 710-764 (TEQP…ELDS). The segment covering 739–751 (QDKKRTASLEKPM) has biased composition (basic and acidic residues).

In terms of assembly, interacts with SLD2.

The protein localises to the nucleus. Has a role in the initiation of DNA replication. Required at S-phase checkpoint. Required for the association of PSF1 with origins. Also required for the proper activation of RAD53 in response to DNA damage and replication blocks. Multicopy suppressor of DPB2 mutation. Overexpression restores the growth defect conferred by POL2 mutation. The sequence is that of DNA replication regulator DPB11 (DPB11) from Saccharomyces cerevisiae (strain ATCC 204508 / S288c) (Baker's yeast).